The sequence spans 167 residues: uncharacterized protein (167 aa).

Residues 39–59 (LSLFSLSPLFLLLSISSLIFS) traverse the membrane as a helical segment. Positions 92 to 122 (LGTQIEMITQAMTTLESRVTDLQQESNDHRT) form a coiled coil. Positions 134–167 (RDLGDENRPKPTTNKMIATGEQHKGEVSTSLFHD) are disordered. The span at 154-167 (EQHKGEVSTSLFHD) shows a compositional bias: basic and acidic residues.

It is found in the mitochondrion membrane. This is an uncharacterized protein from Arabidopsis thaliana (Mouse-ear cress).